The sequence spans 317 residues: tRNA dimethylallyltransferase (317 aa).

Residue 19 to 26 (GPTASGKS) coordinates ATP. 21–26 (TASGKS) is a substrate binding site. Residues 44–47 (DSMQ) are interaction with substrate tRNA.

This sequence belongs to the IPP transferase family. As to quaternary structure, monomer. Mg(2+) is required as a cofactor.

The catalysed reaction is adenosine(37) in tRNA + dimethylallyl diphosphate = N(6)-dimethylallyladenosine(37) in tRNA + diphosphate. In terms of biological role, catalyzes the transfer of a dimethylallyl group onto the adenine at position 37 in tRNAs that read codons beginning with uridine, leading to the formation of N6-(dimethylallyl)adenosine (i(6)A). The polypeptide is tRNA dimethylallyltransferase (Methylorubrum populi (strain ATCC BAA-705 / NCIMB 13946 / BJ001) (Methylobacterium populi)).